Here is a 448-residue protein sequence, read N- to C-terminus: Fibulin-5 (448 aa).

The signal sequence occupies residues 1 to 23; the sequence is MPGLKRILTVTILALWLPHPGNA. In terms of domain architecture, EGF-like 1; calcium-binding spans 42–82; that stretch reads DIDECRTIPEACRGDMMCVNQNGGYLCIPRTNPVYRGPYSN. Cystine bridges form between Cys-46/Cys-59, Cys-53/Cys-68, Cys-131/Cys-144, Cys-138/Cys-153, Cys-155/Cys-166, Cys-172/Cys-181, Cys-177/Cys-190, Cys-192/Cys-205, Cys-211/Cys-221, Cys-217/Cys-230, Cys-232/Cys-245, Cys-251/Cys-262, Cys-258/Cys-271, Cys-273/Cys-286, Cys-292/Cys-305, Cys-299/Cys-314, and Cys-320/Cys-332. The Cell attachment site motif lies at 54–56; it reads RGD. The 41-residue stretch at 127-167 folds into the EGF-like 2; calcium-binding domain; sequence DVDECATDSHQCNPTQICINTEGGYTCSCTDGYWLLEGQCL. One can recognise an EGF-like 3; calcium-binding domain in the interval 168–206; the sequence is DIDECRYGYCQQLCANVPGSYSCTCNPGFTLNDDGRSCQ. An EGF-like 4; calcium-binding domain is found at 207 to 246; sequence DVNECETENPCVQTCVNTYGSFICRCDPGYELEEDGIHCS. Residues 245–448 form an interaction with LOXL1 region; it reads CSDMDECSFS…LRIYVSQYPF (204 aa). The EGF-like 5; calcium-binding domain maps to 247–287; it reads DMDECSFSEFLCQHECVNQPGSYFCSCPPGYVLLDDNRSCQ. 2 N-linked (GlcNAc...) asparagine glycosylation sites follow: Asn-283 and Asn-296. The EGF-like 6; calcium-binding domain occupies 288-333; the sequence is DINECEHRNHTCTSLQTCYNLQGGFKCIDPISCEEPYLLIGENRCM.

This sequence belongs to the fibulin family. As to quaternary structure, homodimer. Monomer, homodimerizes in presence of Ca(2+). Interacts with ELN. Interacts (via N-terminus) with the integrins ITGAV/ITGB3, ITGAV/ITGB5 and ITGA9/ITGB1. Interacts with FBN1 (via N-terminal domain). Forms a ternary complex with ELN and FBN1. Interacts with EFEMP2 with moderate affinity. Interacts with LOXL1. N-glycosylated.

It localises to the secreted. The protein localises to the extracellular space. The protein resides in the extracellular matrix. Its function is as follows. Essential for elastic fiber formation, is involved in the assembly of continuous elastin (ELN) polymer and promotes the interaction of microfibrils and ELN. Stabilizes and organizes elastic fibers in the skin, lung and vasculature. Promotes adhesion of endothelial cells through interaction of integrins and the RGD motif. Vascular ligand for integrin receptors which may play a role in vascular development and remodeling. May act as an adapter that mediates the interaction between FBN1 and ELN. This is Fibulin-5 (Fbln5) from Mus musculus (Mouse).